We begin with the raw amino-acid sequence, 447 residues long: Signal recognition particle protein (447 aa).

GTP contacts are provided by residues 108-115, 190-194, and 248-251; these read GLQGSGKT, DTAGR, and TKLD.

The protein belongs to the GTP-binding SRP family. SRP54 subfamily. In terms of assembly, part of the signal recognition particle protein translocation system, which is composed of SRP and FtsY. Interacts with RNA.

It localises to the cytoplasm. It carries out the reaction GTP + H2O = GDP + phosphate + H(+). In terms of biological role, involved in targeting and insertion of nascent membrane proteins into the cytoplasmic membrane. Binds to the hydrophobic signal sequence of the ribosome-nascent chain (RNC) as it emerges from the ribosomes. The SRP-RNC complex is then targeted to the cytoplasmic membrane where it interacts with the SRP receptor FtsY. The chain is Signal recognition particle protein from Mycoplasma mycoides.